Reading from the N-terminus, the 132-residue chain is Regulator of ribonuclease activity B (132 aa).

This sequence belongs to the RraB family. Interacts with the C-terminal region of Rne.

It localises to the cytoplasm. Its function is as follows. Globally modulates RNA abundance by binding to RNase E (Rne) and regulating its endonucleolytic activity. Can modulate Rne action in a substrate-dependent manner by altering the composition of the degradosome. The sequence is that of Regulator of ribonuclease activity B from Alteromonas mediterranea (strain DSM 17117 / CIP 110805 / LMG 28347 / Deep ecotype).